The sequence spans 469 residues: MKHKVRHIHFVGIGGVGMSGIAEVLLTLGYTVSGSDLAASATTERLAAAGAQIHVGHAEGHVHGANVVVTSTAVQADNPEVMAARAAGIPIVPRAQMLAELMRFKQGIAIAGTHGKTTTTSLVASALGRAGLDPTFVIGGRLTAAGSNARLGSGDYLVAEADESDASFLCLSPVMAVVTNIDADHMDTYGHDFERLKQAFIDFLQRLPFYGRAVLCIDDKHVREILPFVTRPLTTYGLTPDADVRADNIRPVAGQMLFDVVWQQQGEEQRHPVTLNLPGRHNVLNALAAIAIGLECGADIGAIAAGLTEFSGVGRRFQRYGDIALPAGGQATVVDDYGHHPVEMAATLAAARGAFPERRLVLAFQPHRYTRTRDLFEDFVGVLSTVDALLLAEVYPAGEAPIVAADGRALARAVRVAGKVEPVFVERIADLPATLLDQLQDGDVVLTMGAGSIGQTPGRLVTLAGTQAA.

Gly-112–Thr-118 is a binding site for ATP.

It belongs to the MurCDEF family.

Its subcellular location is the cytoplasm. The enzyme catalyses UDP-N-acetyl-alpha-D-muramate + L-alanine + ATP = UDP-N-acetyl-alpha-D-muramoyl-L-alanine + ADP + phosphate + H(+). The protein operates within cell wall biogenesis; peptidoglycan biosynthesis. Functionally, cell wall formation. The protein is UDP-N-acetylmuramate--L-alanine ligase of Laribacter hongkongensis (strain HLHK9).